The chain runs to 833 residues: Leucine--tRNA ligase (833 aa).

The short motif at 41–52 (PYPSGAGLHVGH) is the 'HIGH' region element. A 'KMSKS' region motif is present at residues 610–614 (KMSKS). K613 contributes to the ATP binding site.

The protein belongs to the class-I aminoacyl-tRNA synthetase family.

Its subcellular location is the cytoplasm. It catalyses the reaction tRNA(Leu) + L-leucine + ATP = L-leucyl-tRNA(Leu) + AMP + diphosphate. This chain is Leucine--tRNA ligase, found in Streptococcus agalactiae serotype III (strain NEM316).